The following is a 617-amino-acid chain: Alkaline/neutral invertase E, chloroplastic (617 aa).

Residues 1–45 (MAASETVLRVPLGSVSQSCYLASFFVNSTPNLSFKPVSRNRKTVR) constitute a chloroplast transit peptide. Ser-87 is subject to Phosphoserine.

The protein belongs to the glycosyl hydrolase 100 family. Expressed in roots, leaves and flowers.

Its subcellular location is the plastid. The protein localises to the chloroplast. It carries out the reaction Hydrolysis of terminal non-reducing beta-D-fructofuranoside residues in beta-D-fructofuranosides.. In terms of biological role, chloroplastic invertase that cleaves sucrose into glucose and fructose and is associated with the development of the photosynthetic apparatus and the assimilation of nitrogen in seedlings to control the sucrose to hexose ratio. Participates in the carbon flux between the cytosol and plastids in leaves. This chain is Alkaline/neutral invertase E, chloroplastic, found in Arabidopsis thaliana (Mouse-ear cress).